The following is a 332-amino-acid chain: Leucine carboxyl methyltransferase 1 homolog (332 aa).

S-adenosyl-L-methionine contacts are provided by residues Lys-22, Arg-57, Gly-83, Asp-107, 153-154 (DL), and Glu-180.

Belongs to the methyltransferase superfamily. LCMT family.

It is found in the cytoplasm. The protein resides in the membrane. The enzyme catalyses [phosphatase 2A protein]-C-terminal L-leucine + S-adenosyl-L-methionine = [phosphatase 2A protein]-C-terminal L-leucine methyl ester + S-adenosyl-L-homocysteine. Functionally, methylates the carboxyl group of the C-terminal leucine residue of protein phosphatase 2A (PP2A) catalytic subunits to form alpha-leucine ester residues. Involved in brassinosteroid (BR) signaling. Plays a negative role in BR signaling pathway. Functions as a positive regulator of BRI1 receptor-kinase degradation. Methylates PP2A, thus facilitating its association with activated BRI1. This leads to receptor dephosphorylation and degradation, and thus to the termination of BR signaling. May act upstream of ASK7/BIN2. Involved in methylation of PP2A during environmental stress responses. The polypeptide is Leucine carboxyl methyltransferase 1 homolog (Arabidopsis thaliana (Mouse-ear cress)).